A 125-amino-acid chain; its full sequence is Small ribosomal subunit protein uS12 (125 aa).

A disordered region spans residues 9–31 (RQGREVEKIKSKSPAMENSPQRR). Residue Asp-89 is modified to 3-methylthioaspartic acid. The interval 106 to 125 (GVKDRKQSRSKYGAKRPKKA) is disordered. Basic residues predominate over residues 113–125 (SRSKYGAKRPKKA).

The protein belongs to the universal ribosomal protein uS12 family. As to quaternary structure, part of the 30S ribosomal subunit. Contacts proteins S8 and S17. May interact with IF1 in the 30S initiation complex.

Functionally, with S4 and S5 plays an important role in translational accuracy. Interacts with and stabilizes bases of the 16S rRNA that are involved in tRNA selection in the A site and with the mRNA backbone. Located at the interface of the 30S and 50S subunits, it traverses the body of the 30S subunit contacting proteins on the other side and probably holding the rRNA structure together. The combined cluster of proteins S8, S12 and S17 appears to hold together the shoulder and platform of the 30S subunit. The sequence is that of Small ribosomal subunit protein uS12 from Polaromonas sp. (strain JS666 / ATCC BAA-500).